The chain runs to 228 residues: 7-cyano-7-deazaguanine synthase (228 aa).

16–26 contacts ATP; the sequence is FSGGQDSTTCL. The Zn(2+) site is built by Cys193, Cys201, Cys204, and Cys207.

The protein belongs to the QueC family. Zn(2+) serves as cofactor.

The enzyme catalyses 7-carboxy-7-deazaguanine + NH4(+) + ATP = 7-cyano-7-deazaguanine + ADP + phosphate + H2O + H(+). It functions in the pathway purine metabolism; 7-cyano-7-deazaguanine biosynthesis. Functionally, catalyzes the ATP-dependent conversion of 7-carboxy-7-deazaguanine (CDG) to 7-cyano-7-deazaguanine (preQ(0)). The sequence is that of 7-cyano-7-deazaguanine synthase from Pasteurella multocida (strain Pm70).